The sequence spans 505 residues: Gap junction alpha-10 protein (505 aa).

The Cytoplasmic portion of the chain corresponds to 1-16 (MGDWNLLGGILEEVHS). A helical membrane pass occupies residues 17–37 (HSTIVGKIWLTILFIFRMLVL). Residues 38-76 (GVAAEDVWDDEQSAFACNTQQPGCNNICYDDAFPISLIR) are Extracellular-facing. Residues 77 to 97 (FWVLQIIFVSSPSLVYMGHAL) traverse the membrane as a helical segment. Topologically, residues 98-165 (YRLRDFEKQR…TYVLHILTRS (68 aa)) are cytoplasmic. Residues 166–186 (VLEVGFMIGQYILYGFQMHPI) traverse the membrane as a helical segment. At 187–209 (YKCTQAPCPNSVDCFVSRPTEKT) the chain is on the extracellular side. Residues 210-230 (IFMLFMHSIAAISLLLNILEI) traverse the membrane as a helical segment. At 231-505 (FHLGIRKIMR…IIHETYVYVY (275 aa)) the chain is on the cytoplasmic side. Residues 371–383 (TMTASQHRPSSAL) show a composition bias toward polar residues. The interval 371–491 (TMTASQHRPS…SKSSHVDSPP (121 aa)) is disordered. Residues 437–446 (MSEKGQRHSD) show a composition bias toward basic and acidic residues. The segment covering 447–460 (SGSSRSLNSSCLDF) has biased composition (low complexity).

Belongs to the connexin family. Alpha-type (group II) subfamily. As to quaternary structure, a connexon is composed of a hexamer of connexins. In terms of tissue distribution, low levels were detected in skin, heart, kidney, testis, ovary, intestine. Expression not detected in brain, sciatic nerve or liver. According to PubMed:15147297 expression is detected only in horizontal cells in the inner nuclear layer of the retina and not in other neurons of the central nervous system or tissues. Detected in the outer plexiform layer of the retina (at protein level).

The protein resides in the cell membrane. It is found in the cell junction. The protein localises to the gap junction. One gap junction consists of a cluster of closely packed pairs of transmembrane channels, the connexons, through which materials of low MW diffuse from one cell to a neighboring cell. Involved in tracer coupling between horizontal cells of the retina. May play a role in the regulation of horizontal cell patterning. This is Gap junction alpha-10 protein (Gja10) from Mus musculus (Mouse).